The sequence spans 158 residues: UPF0266 membrane protein YobD (158 aa).

The next 3 membrane-spanning stretches (helical) occupy residues 6-26 (LVLILFIAALLAFAIYDQFIM), 45-65 (IDSVIFVGLIVILIYNNVTNH), and 67-87 (ALITTWLLSALALMGFYIFWI).

The protein belongs to the UPF0266 family.

The protein resides in the cell inner membrane. This is UPF0266 membrane protein YobD from Shigella boydii serotype 4 (strain Sb227).